We begin with the raw amino-acid sequence, 151 residues long: MKLILTADVDNLGAPGDTVEVKDGYGRNYLLPRGLAIVATRGAEKQVEGIRRAQEARAVRGLDHAKELKDAIEGLESISLTVKTAGDSGKLFGSVTAADVAAAIKAAGGPVVDKRSLELPKAHIKATGKHAIVVNLHPDVVAKFHLNVVGA.

Belongs to the bacterial ribosomal protein bL9 family.

In terms of biological role, binds to the 23S rRNA. The polypeptide is Large ribosomal subunit protein bL9 (Rhodococcus opacus (strain B4)).